Reading from the N-terminus, the 173-residue chain is Small ribosomal subunit protein uS5 (173 aa).

Residues 18–81 (YVEKLVKLNR…EKAKANMVTF (64 aa)) enclose the S5 DRBM domain.

Belongs to the universal ribosomal protein uS5 family. As to quaternary structure, part of the 30S ribosomal subunit. Contacts proteins S4 and S8.

In terms of biological role, with S4 and S12 plays an important role in translational accuracy. Located at the back of the 30S subunit body where it stabilizes the conformation of the head with respect to the body. This Treponema denticola (strain ATCC 35405 / DSM 14222 / CIP 103919 / JCM 8153 / KCTC 15104) protein is Small ribosomal subunit protein uS5.